The primary structure comprises 2175 residues: Genome polyprotein (2175 aa).

Residue Gly2 is the site of N-myristoyl glycine; by host attachment. At 2–1485 the chain is on the cytoplasmic side; the sequence is GAQLSRNTAG…NVNRALAVIQ (1484 aa). Amphipathic alpha-helix regions lie at residues 557 to 574 and 560 to 581; these read ILQNDPGKMLKDAIDKQV and NDPGKMLKDAIDKQVAGALVAG. Residues His861 and Asp879 each act as for protease 2A activity in the active site. The Zn(2+) site is built by Cys896 and Cys898. The active-site For protease 2A activity is Cys950. The Zn(2+) site is built by Cys956 and His958. A membrane-binding region spans residues 1090–1162; the sequence is SDNWMKKFTE…EHSSASQERQ (73 aa). The tract at residues 1090 to 1228 is oligomerization; that stretch reads SDNWMKKFTE…SPGTGQSLAT (139 aa). Positions 1111 to 1115 are RNA-binding; it reads AAKIS. The region spanning 1194–1352 is the SF3 helicase domain; it reads EKRVLGAMQF…YKRDGVTLDV (159 aa). Zn(2+) contacts are provided by Cys1359, Cys1370, and Cys1375. The C4-type; degenerate zinc finger occupies 1359–1375; sequence CEDCSPANFKKCMPLIC. An RNA-binding region spans residues 1403-1410; that stretch reads ESNRRYNI. The tract at residues 1414 to 1419 is oligomerization; it reads LEALFQ. The stretch at 1486–1501 is an intramembrane region; that stretch reads SVSLIAAVAGTIYIVY. Topologically, residues 1502–2175 are cytoplasmic; it reads RLFSGMQGPY…ALERKWYDSF (674 aa). O-(5'-phospho-RNA)-tyrosine is present on Tyr1511. A Peptidase C3 domain is found at 1532–1710; it reads GPLFDFGVSL…FAASLLRRYF (179 aa). Residues His1571, Glu1602, and Cys1678 each act as for protease 3C activity in the active site. The 116-residue stretch at 1941 to 2056 folds into the RdRp catalytic domain; that stretch reads GELFGFDYTA…SYPYEIDASL (116 aa). Mg(2+) contacts are provided by Asp1947 and Asp2042.

The protein belongs to the picornaviruses polyprotein family. In terms of assembly, interacts with capsid protein VP1 and capsid protein VP3 to form heterotrimeric protomers. As to quaternary structure, interacts with capsid protein VP0, and capsid protein VP3 to form heterotrimeric protomers. Five protomers subsequently associate to form pentamers which serve as building blocks for the capsid. Interacts with capsid protein VP2, capsid protein VP3 and capsid protein VP4 following cleavage of capsid protein VP0. Interacts with capsid protein VP1 and capsid protein VP3 in the mature capsid. In terms of assembly, interacts with capsid protein VP0 and capsid protein VP1 to form heterotrimeric protomers. Five protomers subsequently associate to form pentamers which serve as building blocks for the capsid. Interacts with capsid protein VP4 in the mature capsid. Interacts with protein 2C; this interaction may be important for virion morphogenesis. As to quaternary structure, interacts with capsid protein VP1 and capsid protein VP3. Homodimer. In terms of assembly, homohexamer; forms a hexameric ring structure with 6-fold symmetry characteristic of AAA+ ATPases. Interacts (via N-terminus) with host RTN3 (via reticulon domain); this interaction is important for viral replication. Interacts with capsid protein VP3; this interaction may be important for virion morphogenesis. As to quaternary structure, interacts with protein 3CD. Homodimer. Interacts with host GBF1. Interacts (via GOLD domain) with host ACBD3 (via GOLD domain); this interaction allows the formation of a viral protein 3A/ACBD3 heterotetramer with a 2:2 stoichiometry, which will stimulate the recruitment of host PI4KB in order to synthesize PI4P at the viral RNA replication sites. In terms of assembly, interacts with RNA-directed RNA polymerase. As to quaternary structure, interacts with protein 3AB and with RNA-directed RNA polymerase. Interacts with Viral protein genome-linked and with protein 3CD. The cofactor is Mg(2+). Specific enzymatic cleavages in vivo by the viral proteases yield processing intermediates and the mature proteins. Post-translationally, myristoylation is required for the formation of pentamers during virus assembly. Further assembly of 12 pentamers and a molecule of genomic RNA generates the provirion. In terms of processing, during virion maturation, immature virions are rendered infectious following cleavage of VP0 into VP4 and VP2. This maturation seems to be an autocatalytic event triggered by the presence of RNA in the capsid and it is followed by a conformational change infectious virion. Myristoylation is required during RNA encapsidation and formation of the mature virus particle. Post-translationally, VPg is uridylylated by the polymerase into VPg-pUpU. This acts as a nucleotide-peptide primer for the genomic RNA replication.

Its subcellular location is the virion. It localises to the host cytoplasm. The protein resides in the host cytoplasmic vesicle membrane. It is found in the host nucleus. The enzyme catalyses a ribonucleoside 5'-triphosphate + H2O = a ribonucleoside 5'-diphosphate + phosphate + H(+). It carries out the reaction Selective cleavage of Tyr-|-Gly bond in the picornavirus polyprotein.. It catalyses the reaction RNA(n) + a ribonucleoside 5'-triphosphate = RNA(n+1) + diphosphate. The catalysed reaction is Selective cleavage of Gln-|-Gly bond in the poliovirus polyprotein. In other picornavirus reactions Glu may be substituted for Gln, and Ser or Thr for Gly.. Replication or transcription is subject to high level of random mutations by the nucleotide analog ribavirin. In terms of biological role, forms an icosahedral capsid of pseudo T=3 symmetry with capsid proteins VP2 and VP3. The capsid is 300 Angstroms in diameter, composed of 60 copies of each capsid protein and enclosing the viral positive strand RNA genome. Capsid protein VP1 mainly forms the vertices of the capsid. Capsid protein VP1 interacts with host cell receptor to provide virion attachment to target host cells. This attachment induces virion internalization. Tyrosine kinases are probably involved in the entry process. After binding to its receptor, the capsid undergoes conformational changes. Capsid protein VP1 N-terminus (that contains an amphipathic alpha-helix) and capsid protein VP4 are externalized. Together, they shape a pore in the host membrane through which viral genome is translocated to host cell cytoplasm. Functionally, forms an icosahedral capsid of pseudo T=3 symmetry with capsid proteins VP2 and VP3. The capsid is 300 Angstroms in diameter, composed of 60 copies of each capsid protein and enclosing the viral positive strand RNA genome. Its function is as follows. Lies on the inner surface of the capsid shell. After binding to the host receptor, the capsid undergoes conformational changes. Capsid protein VP4 is released, Capsid protein VP1 N-terminus is externalized, and together, they shape a pore in the host membrane through which the viral genome is translocated into the host cell cytoplasm. Component of immature procapsids, which is cleaved into capsid proteins VP4 and VP2 after maturation. Allows the capsid to remain inactive before the maturation step. In terms of biological role, cysteine protease that cleaves viral polyprotein and specific host proteins. It is responsible for the autocatalytic cleavage between the P1 and P2 regions, which is the first cleavage occurring in the polyprotein. Also cleaves the host translation initiation factor EIF4G1, in order to shut down the capped cellular mRNA translation. Inhibits the host nucleus-cytoplasm protein and RNA trafficking by cleaving host members of the nuclear pores. Counteracts stress granule formation probably by antagonizing its assembly or promoting its dissassembly. Functionally, plays an essential role in the virus replication cycle by acting as a viroporin. Creates a pore in the host endoplasmic reticulum and as a consequence releases Ca2+ in the cytoplasm of infected cell. In turn, high levels of cytoplasmic calcium may trigger membrane trafficking and transport of viral ER-associated proteins to viroplasms, sites of viral genome replication. Its function is as follows. Induces and associates with structural rearrangements of intracellular membranes. Displays RNA-binding, nucleotide binding and NTPase activities. May play a role in virion morphogenesis and viral RNA encapsidation by interacting with the capsid protein VP3. Localizes the viral replication complex to the surface of membranous vesicles. Together with protein 3CD binds the Cis-Active RNA Element (CRE) which is involved in RNA synthesis initiation. Acts as a cofactor to stimulate the activity of 3D polymerase, maybe through a nucleid acid chaperone activity. In terms of biological role, localizes the viral replication complex to the surface of membranous vesicles. It inhibits host cell endoplasmic reticulum-to-Golgi apparatus transport and causes the disassembly of the Golgi complex, possibly through GBF1 interaction. This would result in depletion of MHC, trail receptors and IFN receptors at the host cell surface. Plays an essential role in viral RNA replication by recruiting ACBD3 and PI4KB at the viral replication sites, thereby allowing the formation of the rearranged membranous structures where viral replication takes place. Functionally, acts as a primer for viral RNA replication and remains covalently bound to viral genomic RNA. VPg is uridylylated prior to priming replication into VPg-pUpU. The oriI viral genomic sequence may act as a template for this. The VPg-pUpU is then used as primer on the genomic RNA poly(A) by the RNA-dependent RNA polymerase to replicate the viral genome. During genome replication, the VPg-RNA linkage is removed by the host TDP2, thereby accelerating replication. During the late stage of the replication cycle, host TDP2 is excluded from sites of viral RNA synthesis and encapsidation, allowing for the generation of progeny virions. Its function is as follows. Involved in the viral replication complex and viral polypeptide maturation. It exhibits protease activity with a specificity and catalytic efficiency that is different from protease 3C. Protein 3CD lacks polymerase activity. Protein 3CD binds to the 5'UTR of the viral genome. Replicates the viral genomic RNA on the surface of intracellular membranes. May form linear arrays of subunits that propagate along a strong head-to-tail interaction called interface-I. Covalently attaches UMP to a tyrosine of VPg, which is used to prime RNA synthesis. The positive stranded RNA genome is first replicated at virus induced membranous vesicles, creating a dsRNA genomic replication form. This dsRNA is then used as template to synthesize positive stranded RNA genomes. ss(+)RNA genomes are either translated, replicated or encapsidated. In terms of biological role, major viral protease that mediates proteolytic processing of the polyprotein. Cleaves host EIF5B, contributing to host translation shutoff. Also cleaves host PABPC1, contributing to host translation shutoff. Cleaves host NLRP1, triggers host N-glycine-mediated degradation of the autoinhibitory NLRP1 N-terminal fragment. The protein is Genome polyprotein of Bos taurus (Bovine).